We begin with the raw amino-acid sequence, 423 residues long: Glutamate-1-semialdehyde 2,1-aminomutase (423 aa).

Lys-262 carries the N6-(pyridoxal phosphate)lysine modification.

Belongs to the class-III pyridoxal-phosphate-dependent aminotransferase family. HemL subfamily. Pyridoxal 5'-phosphate is required as a cofactor.

It is found in the cytoplasm. The enzyme catalyses (S)-4-amino-5-oxopentanoate = 5-aminolevulinate. It participates in porphyrin-containing compound metabolism; protoporphyrin-IX biosynthesis; 5-aminolevulinate from L-glutamyl-tRNA(Glu): step 2/2. The protein is Glutamate-1-semialdehyde 2,1-aminomutase of Methanosphaera stadtmanae (strain ATCC 43021 / DSM 3091 / JCM 11832 / MCB-3).